An 852-amino-acid polypeptide reads, in one-letter code: Mannosyl-oligosaccharide glucosidase GCS1 (852 aa).

The segment at 1–31 (MTGASRRSARGRIKSSSLSPGSDEGSAYPPS) is disordered. The Cytoplasmic segment spans residues 1–51 (MTGASRRSARGRIKSSSLSPGSDEGSAYPPSIRRGKGKELVSIGAFKTNLK). The Endoplasmic reticulum targeting motif lies at 6-12 (RRSARGR). The segment covering 15 to 26 (SSSLSPGSDEGS) has biased composition (low complexity). A helical; Signal-anchor for type II membrane protein transmembrane segment spans residues 52–72 (ILVGLIILGIIVIYFVINRLV). Over 73–852 (RHGLLFDESQ…LIMSEDYPIF (780 aa)) the chain is Lumenal. The tract at residues 91–150 (PAPKVMDLSMFQGEHKESLYWGTYRPHVYFGVRARTPLSLVAGLMWLGVKDEMYVMRHFC) is required for endoplasmic reticulum targeting. Asparagine 282, asparagine 552, and asparagine 570 each carry an N-linked (GlcNAc...) asparagine glycan. Over residues 574–583 (QELNPKTLSS) the composition is skewed to polar residues. The interval 574–593 (QELNPKTLSSGLDDYPRASH) is disordered. Catalysis depends on aspartate 586, which acts as the Proton donor. N-linked (GlcNAc...) asparagine glycosylation is found at asparagine 633, asparagine 662, and asparagine 730. The active-site Proton acceptor is the glutamate 819.

This sequence belongs to the glycosyl hydrolase 63 family. As to expression, constitutively expressed in roots, stems, leaves, flowers and siliques.

It is found in the endoplasmic reticulum membrane. The enzyme catalyses N(4)-(alpha-D-Glc-(1-&gt;2)-alpha-D-Glc-(1-&gt;3)-alpha-D-Glc-(1-&gt;3)-alpha-D-Man-(1-&gt;2)-alpha-D-Man-(1-&gt;2)-alpha-D-Man-(1-&gt;3)-[alpha-D-Man-(1-&gt;2)-alpha-D-Man-(1-&gt;3)-[alpha-D-Man-(1-&gt;2)-alpha-D-Man-(1-&gt;6)]-alpha-D-Man-(1-&gt;6)]-beta-D-Man-(1-&gt;4)-beta-D-GlcNAc-(1-&gt;4)-beta-D-GlcNAc)-L-asparaginyl-[protein] + H2O = N(4)-(alpha-D-Glc-(1-&gt;3)-alpha-D-Glc-(1-&gt;3)-alpha-D-Man-(1-&gt;2)-alpha-D-Man-(1-&gt;2)-alpha-D-Man-(1-&gt;3)-[alpha-D-Man-(1-&gt;2)-alpha-D-Man-(1-&gt;3)-[alpha-D-Man-(1-&gt;2)-alpha-D-Man-(1-&gt;6)]-alpha-D-Man-(1-&gt;6)]-beta-D-Man-(1-&gt;4)-beta-D-GlcNAc-(1-&gt;4)-beta-D-GlcNAc)-L-asparaginyl-[protein] + beta-D-glucose. It functions in the pathway glycan metabolism; N-glycan degradation. Functionally, cleaves the distal alpha 1,2-linked glucose residue from the Glc(3)Man(9)GlcNAc(2) oligosaccharide precursor. Required for the accumulation of seed storage proteins, the formation of protein bodies, cell differentiation, cellulose biosynthesis and organization (in cell walls), cell shape determination and organization (e.g. epidermal cells), and embryo development. Involved in root development. In Arabidopsis thaliana (Mouse-ear cress), this protein is Mannosyl-oligosaccharide glucosidase GCS1 (GCS1).